The primary structure comprises 658 residues: MLQGKLRRSSLKAKLLVSFVIVLILPSIVIGWTSYQQAKTNFNETILQSAEDNVKILNNVINKEIDSKKVDAVYFTKLFNGVSYGTDQLQNVQNKLEEYNKLHPEIEAIYTGSSTGQFIQSPSIQMPDGYNPTERDWYKEAAKKSGEVVITAPYKSSTTGNIVITIAKQNEDKSGVLGIDLIINDIVNTSKMVNIGKTGFVAIFDQSKHVIAHPTMKPGDKIEEKVEKELYKQETGDFKFKLDGDDRNITFITNKQTGWKIAGIMPSKEIIEAANPIFYKTLTVIGISLIIGGVLIYFIIASIISPLKQLVISSKKISEGDLTETITVHSKDEIGQLGESFNEMAASLHHVISNINTSASHVAASSEELTASMKQTSEATEQITQAIEQVSSGAEIQTKEVEEGATLLEGVTEGIQRVADSSSLVSTASMYTKKKAEDGGKLVEQTVNQMQLIHESVSQSDKVIVLLDDKSKQIGAILEVIQHIAEQTNLLALNAAIEAARAGEQGRGFAIVADEVRKLAEQSGQSSTEIGKLVKEIQFDIKETVSSMKQVGTEVQSGLVVANETKQSFAEILKSTDDTVVQIDNMVDVAKQMTVDARQVSASINEIAATIEENAASVQNIAGSSEEQLASVDEINAAAVHLSQMAEELQEMIGKFKV.

Topologically, residues 1–14 are cytoplasmic; it reads MLQGKLRRSSLKAK. Residues 15-35 form a helical membrane-spanning segment; sequence LLVSFVIVLILPSIVIGWTSY. Topologically, residues 36–283 are extracellular; that stretch reads QQAKTNFNET…ANPIFYKTLT (248 aa). The stretch at 44-109 forms a coiled coil; that stretch reads ETILQSAEDN…NKLHPEIEAI (66 aa). In terms of domain architecture, Cache spans 150 to 221; it reads ITAPYKSSTT…AHPTMKPGDK (72 aa). A helical membrane pass occupies residues 284–304; sequence VIGISLIIGGVLIYFIIASII. One can recognise an HAMP domain in the interval 301–353; it reads ASIISPLKQLVISSKKISEGDLTETITVHSKDEIGQLGESFNEMAASLHHVIS. The Cytoplasmic portion of the chain corresponds to 305 to 658; sequence SPLKQLVISS…LQEMIGKFKV (354 aa). Residue Glu-368 is modified to Glutamate methyl ester (Glu). One can recognise a Methyl-accepting transducer domain in the interval 372–622; that stretch reads SMKQTSEATE…ENAASVQNIA (251 aa). Gln-592 bears the Deamidated glutamine mark. Gln-592 carries the glutamate methyl ester (Gln) modification. Glutamate methyl ester (Glu) is present on residues Glu-627 and Glu-634.

The protein belongs to the methyl-accepting chemotaxis (MCP) protein family.

It localises to the cell membrane. Chemotactic-signal transducers respond to changes in the concentration of attractants and repellents in the environment, transduce a signal from the outside to the inside of the cell, and facilitate sensory adaptation through the variation of the level of methylation. In Bacillus thuringiensis subsp. konkukian (strain 97-27), this protein is Probable methyl-accepting chemotaxis protein BT9727_0469.